We begin with the raw amino-acid sequence, 423 residues long: Cytochrome b mRNA maturase bI2 (423 aa).

Over 1–31 (MAFRKSNVYLSLVNSYIIDSPQPSSINYWWN) the chain is Mitochondrial matrix. Positions 1–143 (MAFRKSNVYL…CVYGQMSHWG (143 aa)) are cytochrome b. A helical transmembrane segment spans residues 32–52 (MGSLLGLCLVIQIVTGIFMAM). The Mitochondrial intermembrane segment spans residues 53–84 (HYSSNIELAFSSVEHIMRDVHNGYILRYLHAN). Residues 85 to 105 (GASFFFMVMFMHMAKGLYYGS) traverse the membrane as a helical segment. Over 106–115 (YRSPRVTLWN) the chain is Mitochondrial matrix. A helical membrane pass occupies residues 116 to 136 (VGVIIFILTIATAFLGYCCVY). The Mitochondrial intermembrane portion of the chain corresponds to 137-153 (GQMSHWGNMNIASNMFN). Positions 144 to 423 (NMNIASNMFN…SMKYKLGNYL (280 aa)) are maturase. Residues 154–174 (MMKTIYMMMLMLLIYIFYTIM) form a helical membrane-spanning segment. Residues 175 to 423 (MRQMMKTKEY…SMKYKLGNYL (249 aa)) lie on the Mitochondrial matrix side of the membrane.

It in the N-terminal section; belongs to the cytochrome b family. This sequence in the C-terminal section; belongs to the LAGLIDADG endonuclease family.

Its subcellular location is the mitochondrion inner membrane. Its function is as follows. This protein is responsible for splicing and maturation of cytochrome b mRNA. Specifically, it may be responsible for the splicing specificity of the second intron. This is Cytochrome b mRNA maturase bI2 (BI2) from Saccharomyces cerevisiae (strain ATCC 204508 / S288c) (Baker's yeast).